Consider the following 502-residue polypeptide: Protein GIS3 (502 aa).

The protein localises to the cytoplasm. It is found in the nucleus. The sequence is that of Protein GIS3 (GIS3) from Saccharomyces cerevisiae (strain ATCC 204508 / S288c) (Baker's yeast).